We begin with the raw amino-acid sequence, 317 residues long: D-alanine--D-alanine ligase (317 aa).

Residues 103 to 299 form the ATP-grasp domain; sequence KHIFRSLNID…FNELVKIIIE (197 aa). 130-183 is an ATP binding site; sequence KIDYPYVLKPINEGSSIGVYIIFSHEDYLELKDNSSTIMEKMIVEEYIPGIELH. Residues Asp-251, Glu-265, and Asn-267 each coordinate Mg(2+).

It belongs to the D-alanine--D-alanine ligase family. It depends on Mg(2+) as a cofactor. Requires Mn(2+) as cofactor.

The protein localises to the cytoplasm. The catalysed reaction is 2 D-alanine + ATP = D-alanyl-D-alanine + ADP + phosphate + H(+). It functions in the pathway cell wall biogenesis; peptidoglycan biosynthesis. In terms of biological role, cell wall formation. This chain is D-alanine--D-alanine ligase, found in Wolbachia sp. subsp. Drosophila simulans (strain wRi).